An 80-amino-acid chain; its full sequence is Serine palmitoyltransferase small subunit A-A (80 aa).

Topologically, residues 1-21 are cytoplasmic; that stretch reads MKVLCEDVNGPRSSLGRAWSH. A helical membrane pass occupies residues 22–38; that stretch reads MSWLYYQYLLVTALYML. The Lumenal segment spans residues 39–43; it reads EPWER. Residues 44–66 form a helical membrane-spanning segment; it reads TVFNSMLVSIVGMALYTGYIFMP. Over 67 to 80 the chain is Cytoplasmic; the sequence is QHILAILHYFEIVQ.

Belongs to the SPTSS family. SPTSSA subfamily. As to quaternary structure, component of the serine palmitoyltransferase (SPT) complex, which is composed of SPTLC1, SPTLC2 or SPTLC3 and SPTSSA or SPTSSB. The heterodimer consisting of SPTLC1 and SPTLC2/SPTLC3 forms the catalytic core of the enzyme, while SPTSSA or SPTSSB subunits determine substrate specificity. SPT also interacts with ORMDL proteins, especially ORMDL3, which negatively regulate SPT activity in the presence of ceramides.

The protein resides in the endoplasmic reticulum membrane. It participates in lipid metabolism; sphingolipid metabolism. In terms of biological role, component of the serine palmitoyltransferase multisubunit enzyme (SPT) that catalyzes the initial and rate-limiting step in sphingolipid biosynthesis by condensing L-serine and activated acyl-CoA (most commonly palmitoyl-CoA) to form long-chain bases. The SPT complex is composed of SPTLC1, SPTLC2 or SPTLC3 and SPTSSA or SPTSSB. Within this complex, the heterodimer consisting of SPTLC1 and SPTLC2/SPTLC3 forms the catalytic core. Within the SPT complex, SPTSSA stimulates the catalytic activity and plays a role in substrate specificity, which depends upon the overall complex composition. The SPTLC1-SPTLC2-SPTSSA complex shows a strong preference for C16-CoA substrate, while the SPTLC1-SPTLC3-SPTSSA isozyme uses both C14-CoA and C16-CoA as substrates, with a slight preference for C14-CoA. Independently of its action as a SPT component, may be involved in MBOAT7 localization to mitochondria-associated membranes, a membrane bridge between the endoplasmic reticulum and mitochondria, may hence affect MBOAT7-catalyzed incorporation of arachidonic acid into phosphatidylinositol. The polypeptide is Serine palmitoyltransferase small subunit A-A (sptssa-a) (Xenopus laevis (African clawed frog)).